A 156-amino-acid polypeptide reads, in one-letter code: ATP synthase subunit b (156 aa).

The helical transmembrane segment at 12-32 threads the bilayer; it reads LAFAIFVWFCMKLVWPPITAA.

This sequence belongs to the ATPase B chain family. As to quaternary structure, F-type ATPases have 2 components, F(1) - the catalytic core - and F(0) - the membrane proton channel. F(1) has five subunits: alpha(3), beta(3), gamma(1), delta(1), epsilon(1). F(0) has three main subunits: a(1), b(2) and c(10-14). The alpha and beta chains form an alternating ring which encloses part of the gamma chain. F(1) is attached to F(0) by a central stalk formed by the gamma and epsilon chains, while a peripheral stalk is formed by the delta and b chains.

The protein resides in the cell inner membrane. F(1)F(0) ATP synthase produces ATP from ADP in the presence of a proton or sodium gradient. F-type ATPases consist of two structural domains, F(1) containing the extramembraneous catalytic core and F(0) containing the membrane proton channel, linked together by a central stalk and a peripheral stalk. During catalysis, ATP synthesis in the catalytic domain of F(1) is coupled via a rotary mechanism of the central stalk subunits to proton translocation. Its function is as follows. Component of the F(0) channel, it forms part of the peripheral stalk, linking F(1) to F(0). This is ATP synthase subunit b from Stutzerimonas stutzeri (strain A1501) (Pseudomonas stutzeri).